A 48-amino-acid chain; its full sequence is MTKRTLSNKTRSSILKVSGFRARMATAQGRKIIRTRRQKGRKKLAIPR.

This sequence belongs to the bacterial ribosomal protein bL34 family.

The protein resides in the plastid. It localises to the chloroplast. The polypeptide is Large ribosomal subunit protein bL34c (Thalassiosira pseudonana (Marine diatom)).